The chain runs to 140 residues: Nucleoside diphosphate kinase (140 aa).

Residues K11, F59, R87, T93, R104, and N114 each coordinate ATP. H117 serves as the catalytic Pros-phosphohistidine intermediate.

This sequence belongs to the NDK family. In terms of assembly, homotetramer. Requires Mg(2+) as cofactor.

The protein localises to the cytoplasm. The enzyme catalyses a 2'-deoxyribonucleoside 5'-diphosphate + ATP = a 2'-deoxyribonucleoside 5'-triphosphate + ADP. It carries out the reaction a ribonucleoside 5'-diphosphate + ATP = a ribonucleoside 5'-triphosphate + ADP. Major role in the synthesis of nucleoside triphosphates other than ATP. The ATP gamma phosphate is transferred to the NDP beta phosphate via a ping-pong mechanism, using a phosphorylated active-site intermediate. This Roseobacter denitrificans (strain ATCC 33942 / OCh 114) (Erythrobacter sp. (strain OCh 114)) protein is Nucleoside diphosphate kinase.